Consider the following 1227-residue polypeptide: ATP-dependent helicase/nuclease subunit A (1227 aa).

Residues 37–503 enclose the UvrD-like helicase ATP-binding domain; sequence QKRTAEQIEA…ILLKENFRSQ (467 aa). 58-65 is an ATP binding site; sequence ASAGSGKT. The UvrD-like helicase C-terminal domain occupies 532 to 816; that stretch reads SLVAGSPGQK…QLMTIHKSKG (285 aa).

Belongs to the helicase family. AddA subfamily. Heterodimer of AddA and AddB/RexB. It depends on Mg(2+) as a cofactor.

It catalyses the reaction Couples ATP hydrolysis with the unwinding of duplex DNA by translocating in the 3'-5' direction.. It carries out the reaction ATP + H2O = ADP + phosphate + H(+). In terms of biological role, the heterodimer acts as both an ATP-dependent DNA helicase and an ATP-dependent, dual-direction single-stranded exonuclease. Recognizes the chi site generating a DNA molecule suitable for the initiation of homologous recombination. The AddA nuclease domain is required for chi fragment generation; this subunit has the helicase and 3' -&gt; 5' nuclease activities. This Streptococcus suis (strain 98HAH33) protein is ATP-dependent helicase/nuclease subunit A.